A 430-amino-acid chain; its full sequence is Probable histidine--tRNA ligase, cytoplasmic (430 aa).

The protein belongs to the class-II aminoacyl-tRNA synthetase family.

The protein localises to the cytoplasm. The enzyme catalyses tRNA(His) + L-histidine + ATP = L-histidyl-tRNA(His) + AMP + diphosphate + H(+). The protein is Probable histidine--tRNA ligase, cytoplasmic of Vairimorpha ceranae (strain BRL01) (Microsporidian parasite).